Here is a 424-residue protein sequence, read N- to C-terminus: UDP-N-acetylglucosamine 1-carboxyvinyltransferase (424 aa).

Residue 22-23 (KN) coordinates phosphoenolpyruvate. Position 93 (Arg-93) interacts with UDP-N-acetyl-alpha-D-glucosamine. The Proton donor role is filled by Cys-117. Cys-117 bears the 2-(S-cysteinyl)pyruvic acid O-phosphothioketal mark. UDP-N-acetyl-alpha-D-glucosamine contacts are provided by residues 122–126 (RPVDL), 162–165 (KVSV), Asp-307, and Ile-329.

The protein belongs to the EPSP synthase family. MurA subfamily.

The protein resides in the cytoplasm. It carries out the reaction phosphoenolpyruvate + UDP-N-acetyl-alpha-D-glucosamine = UDP-N-acetyl-3-O-(1-carboxyvinyl)-alpha-D-glucosamine + phosphate. The protein operates within cell wall biogenesis; peptidoglycan biosynthesis. Its function is as follows. Cell wall formation. Adds enolpyruvyl to UDP-N-acetylglucosamine. The chain is UDP-N-acetylglucosamine 1-carboxyvinyltransferase from Haemophilus influenzae (strain PittEE).